The primary structure comprises 96 residues: Large ribosomal subunit protein uL23 (96 aa).

The protein belongs to the universal ribosomal protein uL23 family. As to quaternary structure, part of the 50S ribosomal subunit. Contacts protein L29, and trigger factor when it is bound to the ribosome.

Functionally, one of the early assembly proteins it binds 23S rRNA. One of the proteins that surrounds the polypeptide exit tunnel on the outside of the ribosome. Forms the main docking site for trigger factor binding to the ribosome. The chain is Large ribosomal subunit protein uL23 from Halalkalibacterium halodurans (strain ATCC BAA-125 / DSM 18197 / FERM 7344 / JCM 9153 / C-125) (Bacillus halodurans).